A 357-amino-acid polypeptide reads, in one-letter code: MSFFADLPKDNKKCIKIGSPLALSLSDCLACSGCVSADEAGALSEDLSFVLDLSPQTSFVLSPQSKINIFNLYREDGMEYREFEAVLSSFLRSKFNIHRIVDTSYLRSKIYEETYREYMATNHLIVSACPGVVTYIERTAPYLIGYLSRVKSPQQMAFSLVKGSRTVSVMPCQDKKLENGRDGVKFDFILTTRGFCKALDSLGFRRPARASGKSLCSMEEAETTQWNIGTSSGGYAEFILGKHCVVETREIRNGIKEHLLDDGRTISQITGLENSINYFKSSKTKGPRHKMTEIFLCKNGCIGGPGQERVNDVEMDIREYDRNGREQPRIFYSSPGLEEKRVFREVKAKRVDLRVDW.

Residues C14, C28, C31, C34, C129, C172, C297, and C301 each coordinate [4Fe-4S] cluster.

It belongs to the NARF family.

In terms of biological role, component of the cytosolic Fe/S protein assembly machinery. May play a role in the transfer of pre-assembled Fe/S clusters to target apoproteins. This Encephalitozoon cuniculi (strain GB-M1) (Microsporidian parasite) protein is Cytosolic Fe-S cluster assembly factor NAR1 (NAR1).